Reading from the N-terminus, the 78-residue chain is Acyl carrier protein (78 aa).

Residues 2–77 (STIEERVKKI…EAIDYVTAHA (76 aa)) form the Carrier domain. Ser37 carries the O-(pantetheine 4'-phosphoryl)serine modification.

It belongs to the acyl carrier protein (ACP) family. In terms of processing, 4'-phosphopantetheine is transferred from CoA to a specific serine of apo-ACP by AcpS. This modification is essential for activity because fatty acids are bound in thioester linkage to the sulfhydryl of the prosthetic group.

The protein resides in the cytoplasm. The protein operates within lipid metabolism; fatty acid biosynthesis. Its function is as follows. Carrier of the growing fatty acid chain in fatty acid biosynthesis. The chain is Acyl carrier protein from Ectopseudomonas mendocina (strain ymp) (Pseudomonas mendocina).